Consider the following 250-residue polypeptide: Putative inactive flavonol synthase 2 (250 aa).

The 80-residue stretch at Thr171 to Ala250 folds into the Fe2OG dioxygenase domain. Fe cation is bound by residues His195 and Asp197.

It belongs to the iron/ascorbate-dependent oxidoreductase family.

In Arabidopsis thaliana (Mouse-ear cress), this protein is Putative inactive flavonol synthase 2 (FLS2).